Here is a 250-residue protein sequence, read N- to C-terminus: Flavin-dependent thymidylate synthase (250 aa).

Residues 7-233 (LSVELIACSS…PTVFGDFQVE (227 aa)) enclose the ThyX domain. DUMP contacts are provided by residues 92 to 95 (ELVR), 103 to 107 (QLSQR), and R172. Residues 95–97 (RHR) and Q103 each bind FAD. Residues 95–105 (RHRHFSFSQLS) carry the ThyX motif motif. FAD contacts are provided by residues 188–190 (NFR) and H194. Residue R199 participates in dUMP binding. Catalysis depends on R199, which acts as the Involved in ionization of N3 of dUMP, leading to its activation.

Belongs to the thymidylate synthase ThyX family. As to quaternary structure, homotetramer. It depends on FAD as a cofactor.

The enzyme catalyses dUMP + (6R)-5,10-methylene-5,6,7,8-tetrahydrofolate + NADPH + H(+) = dTMP + (6S)-5,6,7,8-tetrahydrofolate + NADP(+). It functions in the pathway pyrimidine metabolism; dTTP biosynthesis. Its function is as follows. Catalyzes the reductive methylation of 2'-deoxyuridine-5'-monophosphate (dUMP) to 2'-deoxythymidine-5'-monophosphate (dTMP) while utilizing 5,10-methylenetetrahydrofolate (mTHF) as the methyl donor, and NADPH and FADH(2) as the reductant. In Corynebacterium efficiens (strain DSM 44549 / YS-314 / AJ 12310 / JCM 11189 / NBRC 100395), this protein is Flavin-dependent thymidylate synthase.